Here is a 352-residue protein sequence, read N- to C-terminus: Probable RNA methyltransferase Mpe_A3613 (352 aa).

Glu-88 acts as the Proton acceptor in catalysis. One can recognise a Radical SAM core domain in the interval 91–317 (LLPRDGLCVS…TKLRRSAGQD (227 aa)). Residues Cys-98 and Cys-322 are joined by a disulfide bond. 3 residues coordinate [4Fe-4S] cluster: Cys-105, Cys-109, and Cys-112. Residues 150 to 151 (GE), Ser-180, 203 to 205 (SLH), and Asn-279 contribute to the S-adenosyl-L-methionine site. Residue Cys-322 is the S-methylcysteine intermediate of the active site.

This sequence belongs to the radical SAM superfamily. RlmN family. The cofactor is [4Fe-4S] cluster.

The protein localises to the cytoplasm. The protein is Probable RNA methyltransferase Mpe_A3613 of Methylibium petroleiphilum (strain ATCC BAA-1232 / LMG 22953 / PM1).